We begin with the raw amino-acid sequence, 95 residues long: Small ribosomal subunit protein uS19 (95 aa).

The protein belongs to the universal ribosomal protein uS19 family.

Its function is as follows. Protein S19 forms a complex with S13 that binds strongly to the 16S ribosomal RNA. This Roseiflexus castenholzii (strain DSM 13941 / HLO8) protein is Small ribosomal subunit protein uS19.